A 372-amino-acid polypeptide reads, in one-letter code: PqqA peptide cyclase (372 aa).

The Radical SAM core domain maps to 4-219 (APPPLSVLLE…VDTARRELGD (216 aa)). [4Fe-4S] cluster-binding residues include C18, C22, and C25. The disordered stretch occupies residues 342–372 (ATAEREAAAPAPEFIYRRPERPAPATADTLE).

It belongs to the radical SAM superfamily. PqqE family. As to quaternary structure, interacts with PqqD. The interaction is necessary for activity of PqqE. The cofactor is [4Fe-4S] cluster.

The enzyme catalyses [PQQ precursor protein] + S-adenosyl-L-methionine = E-Y cross-linked-[PQQ precursor protein] + 5'-deoxyadenosine + L-methionine + H(+). It functions in the pathway cofactor biosynthesis; pyrroloquinoline quinone biosynthesis. Its function is as follows. Catalyzes the cross-linking of a glutamate residue and a tyrosine residue in the PqqA protein as part of the biosynthesis of pyrroloquinoline quinone (PQQ). In Xanthomonas oryzae pv. oryzae (strain MAFF 311018), this protein is PqqA peptide cyclase.